The primary structure comprises 164 residues: Endoribonuclease YbeY (164 aa).

Zn(2+) contacts are provided by His120, His124, and His130.

This sequence belongs to the endoribonuclease YbeY family. Requires Zn(2+) as cofactor.

It is found in the cytoplasm. In terms of biological role, single strand-specific metallo-endoribonuclease involved in late-stage 70S ribosome quality control and in maturation of the 3' terminus of the 16S rRNA. The chain is Endoribonuclease YbeY from Acidothermus cellulolyticus (strain ATCC 43068 / DSM 8971 / 11B).